The primary structure comprises 746 residues: NAD(P)H-quinone oxidoreductase subunit 5, chloroplastic (746 aa).

Transmembrane regions (helical) follow at residues 9–29 (WIIPFIPLPVPILLGVGLLLF), 40–60 (WTFLSIFLLSIVMIFSIYLSI), 89–109 (IDPLTSIMSILITTVGILVLI), 125–145 (FAYMGFFNTSMLGLVTSSNLI), 147–167 (VYFFWELVGMCSYLLIGFWFT), 185–205 (GDFGLLLGILGLYWITGSFEF), 221–241 (VNLLFLTLCAFLLFVGPIAKS), 258–278 (TPISALIHAATMVAAGIFLVA), 280–300 (LLPLFIVIPSIMYIISLIGII), 327–347 (LGYMMLALGMGSYRSALFHLI), 354–374 (ALLFLGSGSIIHSMEAIVGYS), 396–416 (TAFLIGTLSLCGIPPLACFWS), 425–445 (LLFSPIFAIIACSTAGLTAFY), 547–567 (ILFPMLILVLFTLFIGAIGIP), 608–628 (FSVSIAFFGIFIAYCLYKPFY), and 723–743 (YLFLYLSYVLIFLMILFFFYF).

This sequence belongs to the complex I subunit 5 family. As to quaternary structure, NDH is composed of at least 16 different subunits, 5 of which are encoded in the nucleus.

Its subcellular location is the plastid. It is found in the chloroplast thylakoid membrane. The catalysed reaction is a plastoquinone + NADH + (n+1) H(+)(in) = a plastoquinol + NAD(+) + n H(+)(out). It catalyses the reaction a plastoquinone + NADPH + (n+1) H(+)(in) = a plastoquinol + NADP(+) + n H(+)(out). Its function is as follows. NDH shuttles electrons from NAD(P)H:plastoquinone, via FMN and iron-sulfur (Fe-S) centers, to quinones in the photosynthetic chain and possibly in a chloroplast respiratory chain. The immediate electron acceptor for the enzyme in this species is believed to be plastoquinone. Couples the redox reaction to proton translocation, and thus conserves the redox energy in a proton gradient. In Arabidopsis thaliana (Mouse-ear cress), this protein is NAD(P)H-quinone oxidoreductase subunit 5, chloroplastic (ndhF).